The primary structure comprises 106 residues: NADH dehydrogenase [ubiquinone] iron-sulfur protein 5 (106 aa).

Residues 30-74 form the CHCH domain; it reads PSRCHAFEKEWIECAHGIGSIRAEKECKIEFEDFRECLLRQKTMK. 2 consecutive short sequence motifs (cx9C motif) follow at residues 33–43 and 56–66; these read CHAFEKEWIEC and CKIEFEDFREC. 2 disulfide bridges follow: Cys-33-Cys-66 and Cys-43-Cys-56. The segment at 84 to 106 is disordered; the sequence is EKLIKEGKYTPPPHHSGQEEPRS.

Belongs to the complex I NDUFS5 subunit family. Mammalian complex I is composed of 45 different subunits. This is a component of the iron-sulfur (IP) fragment of the enzyme.

The protein localises to the mitochondrion inner membrane. It is found in the mitochondrion intermembrane space. Its function is as follows. Accessory subunit of the mitochondrial membrane respiratory chain NADH dehydrogenase (Complex I), that is believed not to be involved in catalysis. Complex I functions in the transfer of electrons from NADH to the respiratory chain. The immediate electron acceptor for the enzyme is believed to be ubiquinone. The protein is NADH dehydrogenase [ubiquinone] iron-sulfur protein 5 (NDUFS5) of Bos taurus (Bovine).